A 116-amino-acid polypeptide reads, in one-letter code: Ferredoxin-thioredoxin reductase, catalytic chain (116 aa).

Cys57 is a [4Fe-4S] cluster binding site. Catalysis depends on Cys59, which acts as the Nucleophile. Cys59 and Cys89 form a disulfide bridge. [4Fe-4S] cluster is bound by residues Cys76, Cys78, and Cys87.

This sequence belongs to the ferredoxin thioredoxin reductase beta subunit family. In terms of assembly, heterodimer of subunit A (variable subunit) and subunit B (catalytic subunit). Heterodimeric FTR forms a complex with ferredoxin and thioredoxin. [4Fe-4S] cluster serves as cofactor.

It is found in the plastid. The protein localises to the chloroplast. It catalyses the reaction [thioredoxin]-disulfide + 2 reduced [2Fe-2S]-[ferredoxin] + 2 H(+) = [thioredoxin]-dithiol + 2 oxidized [2Fe-2S]-[ferredoxin]. Functionally, catalytic subunit of the ferredoxin-thioredoxin reductase (FTR), which catalyzes the two-electron reduction of thioredoxins by the electrons provided by reduced ferredoxin. This Pyropia yezoensis (Susabi-nori) protein is Ferredoxin-thioredoxin reductase, catalytic chain (ftrB).